Reading from the N-terminus, the 424-residue chain is Mitogen-activated protein kinase 9 (424 aa).

The region spanning Tyr-26 to Ile-321 is the Protein kinase domain. ATP is bound by residues Ile-32–Val-40 and Lys-55. Asp-151 serves as the catalytic Proton acceptor. Position 183 is a phosphothreonine; by MAP2K7 (Thr-183). The TXY signature appears at Thr-183–Tyr-185. Phosphotyrosine; by MAP2K4 is present on Tyr-185. Positions Lys-368–Arg-424 are disordered. The span at Ser-388–Thr-417 shows a compositional bias: low complexity.

The protein belongs to the protein kinase superfamily. CMGC Ser/Thr protein kinase family. MAP kinase subfamily. As to quaternary structure, interacts with MECOM. Interacts with DCLK2. Binds to at least four scaffolding proteins, MAPK8IP1/JIP-1, MAPK8IP2/JIP-2, MAPK8IP3/JIP-3/JSAP1 and SPAG9/MAPK8IP4/JIP-4. These proteins also bind other components of the JNK signaling pathway. Interacts with NFATC4. Interacts with ATF7; the interaction does not phosphorylate ATF7 but acts as a docking site for ATF7-associated partners such as JUN. Interacts with BCL10. Interacts with CTNNB1 and GSK3B. Interacts with MAPKBP1. Interacts with POU5F1; phosphorylates POU5F1 at 'Ser-355'. Found in a complex with SH3RF1, RAC2, MAP3K7/TAK1, MAP2K7/MKK7, MAPK8IP1/JIP1 and MAPK8/JNK1. It depends on Mg(2+) as a cofactor. Dually phosphorylated on Thr-183 and Tyr-185 by MAP2K7 and MAP2K4, which activates the enzyme. Autophosphorylated in vitro.

It localises to the cytoplasm. Its subcellular location is the nucleus. It carries out the reaction L-seryl-[protein] + ATP = O-phospho-L-seryl-[protein] + ADP + H(+). The enzyme catalyses L-threonyl-[protein] + ATP = O-phospho-L-threonyl-[protein] + ADP + H(+). Activated by threonine and tyrosine phosphorylation by either of two dual specificity kinases, MAP2K4 and MAP2K7. MAP2K4 shows a strong preference for Tyr-185 while MAP2K7 phosphorylates Tyr-183 preferentially. Inhibited by dual specificity phosphatases, such as DUSP1. In terms of biological role, serine/threonine-protein kinase involved in various processes such as cell proliferation, differentiation, migration, transformation and programmed cell death. Extracellular stimuli such as pro-inflammatory cytokines or physical stress stimulate the stress-activated protein kinase/c-Jun N-terminal kinase (SAP/JNK) signaling pathway. In this cascade, two dual specificity kinases MAP2K4/MKK4 and MAP2K7/MKK7 phosphorylate and activate MAPK9/JNK2. In turn, MAPK9/JNK2 phosphorylates a number of transcription factors, primarily components of AP-1 such as JUN and ATF2 and thus regulates AP-1 transcriptional activity. In response to oxidative or ribotoxic stresses, inhibits rRNA synthesis by phosphorylating and inactivating the RNA polymerase 1-specific transcription initiation factor RRN3. Promotes stressed cell apoptosis by phosphorylating key regulatory factors including TP53 and YAP1. In T-cells, MAPK8 and MAPK9 are required for polarized differentiation of T-helper cells into Th1 cells. Upon T-cell receptor (TCR) stimulation, is activated by CARMA1, BCL10, MAP2K7 and MAP3K7/TAK1 to regulate JUN protein levels. Plays an important role in the osmotic stress-induced epithelial tight-junctions disruption. When activated, promotes beta-catenin/CTNNB1 degradation and inhibits the canonical Wnt signaling pathway. Also participates in neurite growth in spiral ganglion neurons. Phosphorylates the CLOCK-BMAL1 heterodimer and plays a role in the regulation of the circadian clock. Phosphorylates POU5F1, which results in the inhibition of POU5F1's transcriptional activity and enhances its proteasomal degradation. Phosphorylates ALKBH5 in response to reactive oxygen species (ROS), promoting ALKBH5 sumoylation and inactivation. Its function is as follows. MAPK9 isoforms display different binding patterns: alpha-1 and alpha-2 preferentially bind to JUN, whereas beta-1 and beta-2 bind to ATF2. However, there is no correlation between binding and phosphorylation, which is achieved at about the same efficiency by all isoforms. JUNB is not a substrate for JNK2 alpha-2, and JUND binds only weakly to it. In Homo sapiens (Human), this protein is Mitogen-activated protein kinase 9 (MAPK9).